An 86-amino-acid chain; its full sequence is Large ribosomal subunit protein bL27 (86 aa).

The interval 1–24 (MATKKAGGSSRNGRDSAGRRLGVK) is disordered.

It belongs to the bacterial ribosomal protein bL27 family.

This is Large ribosomal subunit protein bL27 from Rickettsia felis (strain ATCC VR-1525 / URRWXCal2) (Rickettsia azadi).